Here is a 1297-residue protein sequence, read N- to C-terminus: Phosphoribosylformylglycinamidine synthase (1297 aa).

Positions 304–323 (PFPGAATGSGGEIRDEGATG) are disordered. ATP is bound by residues 307 to 318 (GAATGSGGEIRD) and A678. Residues D679, E718, N722, and D886 each coordinate Mg(2+). Residue S888 participates in ATP binding. The Glutamine amidotransferase type-1 domain maps to 1043–1297 (RIAILREQGV…LFQNARVALG (255 aa)). C1137 functions as the Nucleophile in the catalytic mechanism. Active-site residues include H1262 and E1264.

The protein in the N-terminal section; belongs to the FGAMS family. In terms of assembly, monomer.

It is found in the cytoplasm. The enzyme catalyses N(2)-formyl-N(1)-(5-phospho-beta-D-ribosyl)glycinamide + L-glutamine + ATP + H2O = 2-formamido-N(1)-(5-O-phospho-beta-D-ribosyl)acetamidine + L-glutamate + ADP + phosphate + H(+). Its pathway is purine metabolism; IMP biosynthesis via de novo pathway; 5-amino-1-(5-phospho-D-ribosyl)imidazole from N(2)-formyl-N(1)-(5-phospho-D-ribosyl)glycinamide: step 1/2. Phosphoribosylformylglycinamidine synthase involved in the purines biosynthetic pathway. Catalyzes the ATP-dependent conversion of formylglycinamide ribonucleotide (FGAR) and glutamine to yield formylglycinamidine ribonucleotide (FGAM) and glutamate. The sequence is that of Phosphoribosylformylglycinamidine synthase from Histophilus somni (strain 129Pt) (Haemophilus somnus).